A 140-amino-acid polypeptide reads, in one-letter code: Large ribosomal subunit protein uL11 (140 aa).

This sequence belongs to the universal ribosomal protein uL11 family. As to quaternary structure, part of the ribosomal stalk of the 50S ribosomal subunit. Interacts with L10 and the large rRNA to form the base of the stalk. L10 forms an elongated spine to which L12 dimers bind in a sequential fashion forming a multimeric L10(L12)X complex. One or more lysine residues are methylated.

Functionally, forms part of the ribosomal stalk which helps the ribosome interact with GTP-bound translation factors. The protein is Large ribosomal subunit protein uL11 of Desulfatibacillum aliphaticivorans.